Here is a 239-residue protein sequence, read N- to C-terminus: Ribose-5-phosphate isomerase A (239 aa).

Substrate is bound by residues 40-43, 96-99, and 110-113; these read SGST, DGAD, and KGGG. Residue E119 is the Proton acceptor of the active site. K137 serves as a coordination point for substrate.

It belongs to the ribose 5-phosphate isomerase family. In terms of assembly, homodimer.

It catalyses the reaction aldehydo-D-ribose 5-phosphate = D-ribulose 5-phosphate. It functions in the pathway carbohydrate degradation; pentose phosphate pathway; D-ribose 5-phosphate from D-ribulose 5-phosphate (non-oxidative stage): step 1/1. Its function is as follows. Catalyzes the reversible conversion of ribose-5-phosphate to ribulose 5-phosphate. The chain is Ribose-5-phosphate isomerase A from Methanococcus maripaludis (strain DSM 14266 / JCM 13030 / NBRC 101832 / S2 / LL).